The sequence spans 120 residues: NAD(P)H-quinone oxidoreductase subunit 3, chloroplastic (120 aa).

The next 3 helical transmembrane spans lie at 9-29 (IFWA…FISG), 64-84 (MFAL…PWAM), and 88-108 (VLGV…IVGL).

The protein belongs to the complex I subunit 3 family. As to quaternary structure, NDH is composed of at least 16 different subunits, 5 of which are encoded in the nucleus.

The protein resides in the plastid. It is found in the chloroplast thylakoid membrane. The catalysed reaction is a plastoquinone + NADH + (n+1) H(+)(in) = a plastoquinol + NAD(+) + n H(+)(out). It catalyses the reaction a plastoquinone + NADPH + (n+1) H(+)(in) = a plastoquinol + NADP(+) + n H(+)(out). Its function is as follows. NDH shuttles electrons from NAD(P)H:plastoquinone, via FMN and iron-sulfur (Fe-S) centers, to quinones in the photosynthetic chain and possibly in a chloroplast respiratory chain. The immediate electron acceptor for the enzyme in this species is believed to be plastoquinone. Couples the redox reaction to proton translocation, and thus conserves the redox energy in a proton gradient. This is NAD(P)H-quinone oxidoreductase subunit 3, chloroplastic from Panax ginseng (Korean ginseng).